The chain runs to 429 residues: L-dopachrome tautomerase yellow-f (429 aa).

Residues 1–23 (MLSLDVLLLCAISGFQLLISADG) form the signal peptide. Asn133 and Asn372 each carry an N-linked (GlcNAc...) asparagine glycan.

This sequence belongs to the major royal jelly protein family.

The protein resides in the secreted. The catalysed reaction is L-dopachrome = 5,6-dihydroxyindole-2-carboxylate. The protein operates within pigment biosynthesis; melanin biosynthesis. Tautomerization of L-dopachrome with decarboxylation to give 5,6-dihydroxyindole (DHI). Also catalyzes the tautomerization of the methyl ester of L-dopachrome and dopamine chrome. May play a role in melanization reactions during late pupal and adult stages. May play a role in melanization reactions during larval and early pupal stages. This chain is L-dopachrome tautomerase yellow-f, found in Drosophila melanogaster (Fruit fly).